The chain runs to 715 residues: Polyribonucleotide nucleotidyltransferase (715 aa).

Mg(2+)-binding residues include D495 and D501. The 60-residue stretch at 562 to 621 folds into the KH domain; sequence PRLLTLQIPPDMIGLVIGPGGKTVRGISEQYNVKVDISEEGLVTITAPNETNAKQARAAI. In terms of domain architecture, S1 motif spans 631 to 699; the sequence is GDVYLGRVTR…SKGRINLTRL (69 aa).

This sequence belongs to the polyribonucleotide nucleotidyltransferase family. The cofactor is Mg(2+).

Its subcellular location is the cytoplasm. The catalysed reaction is RNA(n+1) + phosphate = RNA(n) + a ribonucleoside 5'-diphosphate. Its function is as follows. Involved in mRNA degradation. Catalyzes the phosphorolysis of single-stranded polyribonucleotides processively in the 3'- to 5'-direction. This Thermosynechococcus vestitus (strain NIES-2133 / IAM M-273 / BP-1) protein is Polyribonucleotide nucleotidyltransferase.